Here is a 447-residue protein sequence, read N- to C-terminus: ATP-dependent protease ATPase subunit HslU (447 aa).

Residues I17 and 59–64 (GVGKTE) each bind ATP. The interval 136–160 (PPARGGFQGEPTAEEKPTEKKESAT) is disordered. The segment covering 148–159 (AEEKPTEKKESA) has biased composition (basic and acidic residues). ATP contacts are provided by D260, E325, and R397.

The protein belongs to the ClpX chaperone family. HslU subfamily. In terms of assembly, a double ring-shaped homohexamer of HslV is capped on each side by a ring-shaped HslU homohexamer. The assembly of the HslU/HslV complex is dependent on binding of ATP.

Its subcellular location is the cytoplasm. Functionally, ATPase subunit of a proteasome-like degradation complex; this subunit has chaperone activity. The binding of ATP and its subsequent hydrolysis by HslU are essential for unfolding of protein substrates subsequently hydrolyzed by HslV. HslU recognizes the N-terminal part of its protein substrates and unfolds these before they are guided to HslV for hydrolysis. In Coxiella burnetii (strain Dugway 5J108-111), this protein is ATP-dependent protease ATPase subunit HslU.